Reading from the N-terminus, the 115-residue chain is Large ribosomal subunit protein bL20 (115 aa).

The protein belongs to the bacterial ribosomal protein bL20 family.

In terms of biological role, binds directly to 23S ribosomal RNA and is necessary for the in vitro assembly process of the 50S ribosomal subunit. It is not involved in the protein synthesizing functions of that subunit. This Borrelia hermsii (strain HS1 / DAH) protein is Large ribosomal subunit protein bL20.